Consider the following 865-residue polypeptide: Aconitate hydratase B (865 aa).

Residues Arg191, 244–246 (SSR), 414–416 (QDT), and Ser498 each bind substrate. [4Fe-4S] cluster-binding residues include Cys710, Cys769, and Cys772. Residues Arg791 and Arg796 each coordinate substrate.

Belongs to the aconitase/IPM isomerase family. Monomer. AcnB can also form a homodimer. The monomer-homodimer transition is dependent on iron availability and the carboxymethylation of C-273 inhibits the dimer formation. It depends on [4Fe-4S] cluster as a cofactor.

The catalysed reaction is citrate = D-threo-isocitrate. The enzyme catalyses (2S,3R)-3-hydroxybutane-1,2,3-tricarboxylate = 2-methyl-cis-aconitate + H2O. It participates in organic acid metabolism; propanoate degradation. It functions in the pathway carbohydrate metabolism; tricarboxylic acid cycle; isocitrate from oxaloacetate: step 2/2. Functionally, involved in the catabolism of short chain fatty acids (SCFA) via the tricarboxylic acid (TCA)(acetyl degradation route) and the 2-methylcitrate cycle I (propionate degradation route). Catalyzes the reversible isomerization of citrate to isocitrate via cis-aconitate. Also catalyzes the hydration of 2-methyl-cis-aconitate to yield (2R,3S)-2-methylisocitrate. The apo form of AcnB functions as a RNA-binding regulatory protein. During oxidative stress inactive AcnB apo-enzyme without iron sulfur clusters binds the acnB mRNA 3' UTRs (untranslated regions), stabilizes acnB mRNA and increases AcnB synthesis, thus mediating a post-transcriptional positive autoregulatory switch. AcnB also decreases the stability of the sodA transcript. The chain is Aconitate hydratase B from Escherichia coli (strain K12).